The primary structure comprises 218 residues: Deoxyribose-phosphate aldolase (218 aa).

Asp92 acts as the Proton donor/acceptor in catalysis. Lys156 functions as the Schiff-base intermediate with acetaldehyde in the catalytic mechanism. The Proton donor/acceptor role is filled by Lys185.

It belongs to the DeoC/FbaB aldolase family. DeoC type 1 subfamily.

It is found in the cytoplasm. The enzyme catalyses 2-deoxy-D-ribose 5-phosphate = D-glyceraldehyde 3-phosphate + acetaldehyde. The protein operates within carbohydrate degradation; 2-deoxy-D-ribose 1-phosphate degradation; D-glyceraldehyde 3-phosphate and acetaldehyde from 2-deoxy-alpha-D-ribose 1-phosphate: step 2/2. In terms of biological role, catalyzes a reversible aldol reaction between acetaldehyde and D-glyceraldehyde 3-phosphate to generate 2-deoxy-D-ribose 5-phosphate. This is Deoxyribose-phosphate aldolase from Desulfitobacterium hafniense (strain DSM 10664 / DCB-2).